Here is a 500-residue protein sequence, read N- to C-terminus: Glycerol kinase (500 aa).

Thr-16 contacts ADP. Residues Thr-16 and Thr-17 each contribute to the ATP site. Thr-16 contributes to the sn-glycerol 3-phosphate binding site. Residue Arg-20 coordinates ADP. Residues Arg-86, Glu-87, Tyr-138, and Asp-243 each coordinate sn-glycerol 3-phosphate. Arg-86, Glu-87, Tyr-138, Asp-243, and Gln-244 together coordinate glycerol. ADP is bound by residues Thr-265 and Gly-313. ATP-binding residues include Thr-265, Gly-313, Gln-317, and Gly-414. Positions 414 and 418 each coordinate ADP.

It belongs to the FGGY kinase family.

The catalysed reaction is glycerol + ATP = sn-glycerol 3-phosphate + ADP + H(+). It participates in polyol metabolism; glycerol degradation via glycerol kinase pathway; sn-glycerol 3-phosphate from glycerol: step 1/1. With respect to regulation, inhibited by fructose 1,6-bisphosphate (FBP). Key enzyme in the regulation of glycerol uptake and metabolism. Catalyzes the phosphorylation of glycerol to yield sn-glycerol 3-phosphate. The polypeptide is Glycerol kinase (Trichormus variabilis (strain ATCC 29413 / PCC 7937) (Anabaena variabilis)).